The primary structure comprises 100 residues: Urease subunit gamma (100 aa).

It belongs to the urease gamma subunit family. In terms of assembly, heterotrimer of UreA (gamma), UreB (beta) and UreC (alpha) subunits. Three heterotrimers associate to form the active enzyme.

The protein localises to the cytoplasm. The enzyme catalyses urea + 2 H2O + H(+) = hydrogencarbonate + 2 NH4(+). It functions in the pathway nitrogen metabolism; urea degradation; CO(2) and NH(3) from urea (urease route): step 1/1. The chain is Urease subunit gamma from Yersinia rohdei.